We begin with the raw amino-acid sequence, 326 residues long: tRNA-modifying protein YgfZ (326 aa).

The folate site is built by Trp27 and Trp189.

It belongs to the tRNA-modifying YgfZ family.

It is found in the cytoplasm. Functionally, folate-binding protein involved in regulating the level of ATP-DnaA and in the modification of some tRNAs. It is probably a key factor in regulatory networks that act via tRNA modification, such as initiation of chromosomal replication. The chain is tRNA-modifying protein YgfZ from Escherichia coli (strain SE11).